A 200-amino-acid chain; its full sequence is 3-isopropylmalate dehydratase small subunit (200 aa).

This sequence belongs to the LeuD family. LeuD type 1 subfamily. As to quaternary structure, heterodimer of LeuC and LeuD.

It catalyses the reaction (2R,3S)-3-isopropylmalate = (2S)-2-isopropylmalate. It functions in the pathway amino-acid biosynthesis; L-leucine biosynthesis; L-leucine from 3-methyl-2-oxobutanoate: step 2/4. Its function is as follows. Catalyzes the isomerization between 2-isopropylmalate and 3-isopropylmalate, via the formation of 2-isopropylmaleate. The chain is 3-isopropylmalate dehydratase small subunit from Aliivibrio fischeri (strain ATCC 700601 / ES114) (Vibrio fischeri).